The sequence spans 141 residues: Large ribosomal subunit protein uL16 (141 aa).

The span at 1-17 (MLQPKRTKYRKVQKGKM) shows a compositional bias: basic residues. A disordered region spans residues 1–29 (MLQPKRTKYRKVQKGKMKGNSQRGHELSN).

It belongs to the universal ribosomal protein uL16 family. As to quaternary structure, part of the 50S ribosomal subunit.

In terms of biological role, binds 23S rRNA and is also seen to make contacts with the A and possibly P site tRNAs. The sequence is that of Large ribosomal subunit protein uL16 from Flavobacterium psychrophilum (strain ATCC 49511 / DSM 21280 / CIP 103535 / JIP02/86).